The chain runs to 208 residues: ATP phosphoribosyltransferase (208 aa).

This sequence belongs to the ATP phosphoribosyltransferase family. Short subfamily. As to quaternary structure, heteromultimer composed of HisG and HisZ subunits.

The protein resides in the cytoplasm. It catalyses the reaction 1-(5-phospho-beta-D-ribosyl)-ATP + diphosphate = 5-phospho-alpha-D-ribose 1-diphosphate + ATP. It functions in the pathway amino-acid biosynthesis; L-histidine biosynthesis; L-histidine from 5-phospho-alpha-D-ribose 1-diphosphate: step 1/9. Functionally, catalyzes the condensation of ATP and 5-phosphoribose 1-diphosphate to form N'-(5'-phosphoribosyl)-ATP (PR-ATP). Has a crucial role in the pathway because the rate of histidine biosynthesis seems to be controlled primarily by regulation of HisG enzymatic activity. The sequence is that of ATP phosphoribosyltransferase from Thermotoga neapolitana (strain ATCC 49049 / DSM 4359 / NBRC 107923 / NS-E).